We begin with the raw amino-acid sequence, 262 residues long: Putative protein-methionine-sulfoxide reductase subunit YedZ1 (262 aa).

This sequence belongs to the MsrP family.

In terms of biological role, part of the YedY1-YedZ1 system that may repair oxidized proteins containing methionine sulfoxide residues (Met-O). In Azospira oryzae (strain ATCC BAA-33 / DSM 13638 / PS) (Dechlorosoma suillum), this protein is Putative protein-methionine-sulfoxide reductase subunit YedZ1.